Here is a 177-residue protein sequence, read N- to C-terminus: Disulfide bond formation protein B (177 aa).

Residues 1–14 lie on the Cytoplasmic side of the membrane; that stretch reads MLIFFKNLSMKRST. Residues 15 to 31 traverse the membrane as a helical segment; the sequence is WILLFISALVLESTALY. The Periplasmic segment spans residues 32–49; that stretch reads FQHGMGLNPCVMCIYERV. Residues Cys41 and Cys44 are joined by a disulfide bond. The helical transmembrane segment at 50–65 threads the bilayer; it reads AILGILFSGLIGCIAP. Residues 66–72 lie on the Cytoplasmic side of the membrane; sequence KWLVLRI. The helical transmembrane segment at 73–90 threads the bilayer; the sequence is LALLIGLGSAVKGLLLAI. Residues 91-145 are Periplasmic-facing; sequence KHLDYQINVYPWNQCAMVPDFPQTLPLDKWFPNIFMPSGSCSDITWSFLGFSMVQ. Residues Cys105 and Cys131 are joined by a disulfide bond. The helical transmembrane segment at 146–164 threads the bilayer; the sequence is WIIVIFACYFLFFIILSIS. The Cytoplasmic segment spans residues 165-177; it reads QFKKVRKNRMLFR.

It belongs to the DsbB family.

It localises to the cell inner membrane. Required for disulfide bond formation in some periplasmic proteins. Acts by oxidizing the DsbA protein. The sequence is that of Disulfide bond formation protein B from Histophilus somni (strain 129Pt) (Haemophilus somnus).